The primary structure comprises 1286 residues: MDRDSLPRVPDTHGDVVDEKLFSDLYIRTSWVDAQVALDQIDKGKARGSRTAIYLRSVFQSHLETLGSSVQKHAGKVLFVAILVLSTFCVGLKSAQIHSKVHQLWIQEGGRLEAELAYTQKTIGEDESATHQLLIQTTHDPNASVLHPQALLAHLEVLVKATAVKVHLYDTEWGLRDMCNMPSTPSFEGIYYIEQILRHLIPCSIITPLDCFWEGSQLLGPESAVVIPGLNQRLLWTTLNPASVMQYMKQKMSEEKISFDFETVEQYMKRAAIGSGYMEKPCLNPLNPNCPDTAPNKNSTQPPDVGAILSGGCYGYAAKHMHWPEELIVGGAKRNRSGHLRKAQALQSVVQLMTEKEMYDQWQDNYKVHHLGWTQEKAAEVLNAWQRNFSREVEQLLRKQSRIATNYDIYVFSSAALDDILAKFSHPSALSIVIGVAVTVLYAFCTLLRWRDPVRGQSSVGVAGVLLMCFSTAAGLGLSALLGIVFNAASTQVVPFLALGLGVDHIFMLTAAYAESNRREQTKLILKKVGPSILFSACSTAGSFFAAAFIPVPALKVFCLQAAIVMCSNLAAALLVFPAMISLDLRRRTAGRADIFCCCFPVWKEQPKVAPPVLPLNNNNGRGARHPKSCNNNRVPLPAQNPLLEQRADIPGSSHSLASFSLATFAFQHYTPFLMRSWVKFLTVMGFLAALISSLYASTRLQDGLDIIDLVPKDSNEHKFLDAQTRLFGFYSMYAVTQGNFEYPTQQQLLRDYHDSFVRVPHVIKNDNGGLPDFWLLLFSEWLGNLQKIFDEEYRDGRLTKECWFPNASSDAILAYKLIVQTGHVDNPVDKELVLTNRLVNSDGIINQRAFYNYLSAWATNDVFAYGASQGKLYPEPRQYFHQPNEYDLKIPKSLPLVYAQMPFYLHGLTDTSQIKTLIGHIRDLSVKYEGFGLPNYPSGIPFIFWEQYMTLRSSLAMILACVLLAALVLVSLLLLSVWAAVLVILSVLASLAQIFGAMTLLGIKLSAIPAVILILSVGMMLCFNVLISLGFMTSVGNRQRRVQLSMQMSLGPLVHGMLTSGVAVFMLSTSPFEFVIRHFCWLLLVVLCVGACNSLLVFPILLSMVGPEAELVPLEHPDRISTPSPLPVRSSKRSGKSYVVQGSRSSRGSCQKSHHHHHKDLNDPSLTTITEEPQSWKSSNSSIQMPNDWTYQPREQRPASYAAPPPAYHKAAAQQHHQHQGPPTTPPPPFPTAYPPELQSIVVQPEVTVETTHSDSNTTKVTATANIKVELAMPGRAVRSYNFTS.

Over 1–76 the chain is Cytoplasmic; that stretch reads MDRDSLPRVP…GSSVQKHAGK (76 aa). Residues 77–92 form a helical membrane-spanning segment; sequence VLFVAILVLSTFCVGL. Over 93 to 427 the chain is Extracellular; it reads KSAQIHSKVH…DDILAKFSHP (335 aa). N-linked (GlcNAc...) asparagine glycans are attached at residues Asn-142, Asn-298, Asn-335, and Asn-388. The helical transmembrane segment at 428–448 threads the bilayer; it reads SALSIVIGVAVTVLYAFCTLL. The SSD domain maps to 428-583; it reads SALSIVIGVA…LLVFPAMISL (156 aa). At 449-465 the chain is on the cytoplasmic side; that stretch reads RWRDPVRGQSSVGVAGV. Residues 466 to 486 traverse the membrane as a helical segment; that stretch reads LLMCFSTAAGLGLSALLGIVF. Topologically, residues 487–492 are extracellular; it reads NAASTQ. The chain crosses the membrane as a helical span at residues 493-511; that stretch reads VVPFLALGLGVDHIFMLTA. At 512 to 532 the chain is on the cytoplasmic side; that stretch reads AYAESNRREQTKLILKKVGPS. Residues 533–553 form a helical membrane-spanning segment; sequence ILFSACSTAGSFFAAAFIPVP. Over 554 to 562 the chain is Extracellular; the sequence is ALKVFCLQA. Residues 563-583 traverse the membrane as a helical segment; that stretch reads AIVMCSNLAAALLVFPAMISL. Residues 584–677 lie on the Cytoplasmic side of the membrane; that stretch reads DLRRRTAGRA…QHYTPFLMRS (94 aa). Residues 678-699 traverse the membrane as a helical segment; the sequence is WVKFLTVMGFLAALISSLYAST. Residues 700–931 lie on the Extracellular side of the membrane; it reads RLQDGLDIID…IRDLSVKYEG (232 aa). Asn-807 carries an N-linked (GlcNAc...) asparagine glycan. Residues 932–952 form a helical membrane-spanning segment; sequence FGLPNYPSGIPFIFWEQYMTL. At 953 to 955 the chain is on the cytoplasmic side; sequence RSS. The helical transmembrane segment at 956-976 threads the bilayer; sequence LAMILACVLLAALVLVSLLLL. At 977 to 1007 the chain is on the extracellular side; it reads SVWAAVLVILSVLASLAQIFGAMTLLGIKLS. The chain crosses the membrane as a helical span at residues 1008–1028; sequence AIPAVILILSVGMMLCFNVLI. Over 1029 to 1056 the chain is Cytoplasmic; that stretch reads SLGFMTSVGNRQRRVQLSMQMSLGPLVH. Residues 1057-1077 form a helical membrane-spanning segment; it reads GMLTSGVAVFMLSTSPFEFVI. Residues 1078–1082 lie on the Extracellular side of the membrane; the sequence is RHFCW. The helical transmembrane segment at 1083–1103 threads the bilayer; it reads LLLVVLCVGACNSLLVFPILL. Over 1104-1286 the chain is Cytoplasmic; it reads SMVGPEAELV…RAVRSYNFTS (183 aa). A disordered region spans residues 1116–1237; sequence EHPDRISTPS…PPPFPTAYPP (122 aa). Composition is skewed to polar residues over residues 1141–1152 and 1165–1191; these read VQGSRSSRGSCQ and PSLT…NDWT. Over residues 1199-1216 the composition is skewed to low complexity; sequence PASYAAPPPAYHKAAAQQ. Over residues 1224–1235 the composition is skewed to pro residues; the sequence is PTTPPPPFPTAY.

This sequence belongs to the patched family. In terms of assembly, interacts (via C-terminal cytoplasmic region) with CG5504/l(2)tid; the interaction is probably direct. Interacts with hh/hedgehog.

The protein localises to the membrane. Functionally, segmentation polarity protein. Acts as a receptor for the hedgehog protein (hh). Associates with the smoothened protein (SMO) to transduce the hedgehog signal leading to the activation of wingless, decapentaplegic and patched itself. Participates in cell interactions that establish pattern within the segment and the imaginal disks during development. In the absence of HH, represses the constitutive signaling activity of smo through fused (FU). The polypeptide is Protein patched (Drosophila melanogaster (Fruit fly)).